The chain runs to 178 residues: uncharacterized protein (178 aa).

It localises to the mitochondrion. This is an uncharacterized protein from Paramecium tetraurelia.